The following is a 285-amino-acid chain: SLAM family member 8 (285 aa).

An N-terminal signal peptide occupies residues 1-22; it reads MVMRPLWSLLLWEALLPITVTG. The Extracellular portion of the chain corresponds to 23–233; sequence AQVLSKVGGS…AAPGKASYKD (211 aa). Asn-85 carries an N-linked (GlcNAc...) asparagine glycan. The 88-residue stretch at 128–215 folds into the Ig-like C2-type domain; it reads PVVQVFIAVE…PVSWDLATVT (88 aa). The cysteines at positions 152 and 201 are disulfide-linked. The chain crosses the membrane as a helical span at residues 234–254; it reads VLLVVVPVSLLLMLVTLFSAW. Residues 255–285 lie on the Cytoplasmic side of the membrane; it reads HWCPCSGKKKKDVHADRVGPETENPLVQDLP. The tract at residues 262 to 285 is disordered; sequence KKKKDVHADRVGPETENPLVQDLP.

As to expression, expressed in lymph node, spleen, thymus and bone marrow.

It is found in the membrane. May play a role in B-lineage commitment and/or modulation of signaling through the B-cell receptor. This is SLAM family member 8 (SLAMF8) from Homo sapiens (Human).